The chain runs to 298 residues: Ribosomal RNA small subunit methyltransferase A (298 aa).

The S-adenosyl-L-methionine site is built by Asn-35, Leu-37, Gly-62, Glu-83, Asp-108, and Asn-133.

It belongs to the class I-like SAM-binding methyltransferase superfamily. rRNA adenine N(6)-methyltransferase family. RsmA subfamily.

The protein resides in the cytoplasm. It catalyses the reaction adenosine(1518)/adenosine(1519) in 16S rRNA + 4 S-adenosyl-L-methionine = N(6)-dimethyladenosine(1518)/N(6)-dimethyladenosine(1519) in 16S rRNA + 4 S-adenosyl-L-homocysteine + 4 H(+). Its function is as follows. Specifically dimethylates two adjacent adenosines (A1518 and A1519) in the loop of a conserved hairpin near the 3'-end of 16S rRNA in the 30S particle. May play a critical role in biogenesis of 30S subunits. The chain is Ribosomal RNA small subunit methyltransferase A from Streptococcus pyogenes serotype M4 (strain MGAS10750).